Reading from the N-terminus, the 265-residue chain is Glutamate racemase (265 aa).

Residues 13–14 (DS) and 45–46 (YG) each bind substrate. Cysteine 77 functions as the Proton donor/acceptor in the catalytic mechanism. 78-79 (NT) provides a ligand contact to substrate. The Proton donor/acceptor role is filled by cysteine 185. Residue 186-187 (TH) participates in substrate binding.

It belongs to the aspartate/glutamate racemases family.

It carries out the reaction L-glutamate = D-glutamate. Its pathway is cell wall biogenesis; peptidoglycan biosynthesis. In terms of biological role, provides the (R)-glutamate required for cell wall biosynthesis. This Vibrio cholerae serotype O1 (strain ATCC 39315 / El Tor Inaba N16961) protein is Glutamate racemase.